A 398-amino-acid polypeptide reads, in one-letter code: Phosphoglycerate kinase (398 aa).

Residues D21–N23, R36, H59–R62, R119, and R157 contribute to the substrate site. ATP contacts are provided by residues K208, G296, E327, and G354–S357.

It belongs to the phosphoglycerate kinase family. As to quaternary structure, monomer.

Its subcellular location is the cytoplasm. It catalyses the reaction (2R)-3-phosphoglycerate + ATP = (2R)-3-phospho-glyceroyl phosphate + ADP. Its pathway is carbohydrate degradation; glycolysis; pyruvate from D-glyceraldehyde 3-phosphate: step 2/5. This chain is Phosphoglycerate kinase, found in Streptococcus equi subsp. zooepidemicus (strain MGCS10565).